A 102-amino-acid polypeptide reads, in one-letter code: Large ribosomal subunit protein bL21 (102 aa).

This sequence belongs to the bacterial ribosomal protein bL21 family. In terms of assembly, part of the 50S ribosomal subunit. Contacts protein L20.

In terms of biological role, this protein binds to 23S rRNA in the presence of protein L20. This Listeria innocua serovar 6a (strain ATCC BAA-680 / CLIP 11262) protein is Large ribosomal subunit protein bL21.